We begin with the raw amino-acid sequence, 505 residues long: Probable cytochrome P450 28c1 (505 aa).

A heme-binding site is contributed by Cys-444.

Belongs to the cytochrome P450 family. The cofactor is heme.

The protein localises to the endoplasmic reticulum membrane. It is found in the microsome membrane. Its function is as follows. May be involved in the metabolism of insect hormones and in the breakdown of synthetic insecticides. The sequence is that of Probable cytochrome P450 28c1 (Cyp28c1) from Drosophila melanogaster (Fruit fly).